The chain runs to 1615 residues: Low-density lipoprotein receptor-related protein 5 (1615 aa).

The signal sequence occupies residues 1-31; that stretch reads MEAAPPGPPWPLLLLLLLLLALCGCPAPAAA. The beta-propeller 1 stretch occupies residues 32–288; sequence SPLLLFANRR…YSPMDIQVLS (257 aa). Topologically, residues 32-1384 are extracellular; it reads SPLLLFANRR…PPSDDSPAHS (1353 aa). LDL-receptor class B repeat units lie at residues 75–119, 120–162, 163–206, 207–247, and 248–290; these read GAVY…DWVG, KKLY…DPAH, GYMY…DLEE, QKLY…TLSG, and DTLY…LSQE. The YWTD 1 repeat unit spans residues 78–81; sequence YWTD. Asn93 is a glycosylation site (N-linked (GlcNAc...) asparagine). The stretch at 123-126 is one YWTD 2 repeat; the sequence is YWTD. An N-linked (GlcNAc...) asparagine glycan is attached at Asn138. The stretch at 166-169 is one YWTD 3 repeat; it reads YWTD. One copy of the YWTD 4 repeat lies at 251–254; it reads YWTD. Positions 295-337 constitute an EGF-like 1 domain; sequence FHTRCEEDNGGCSHLCLLSPSEPFYTCACPTGVQLQDNGRTCK. 3 cysteine pairs are disulfide-bonded: Cys299/Cys310, Cys306/Cys321, and Cys323/Cys336. The beta-propeller 2 stretch occupies residues 341–602; it reads EEVLLLARRT…AVNVAKVVGT (262 aa). LDL-receptor class B repeat units follow at residues 385 to 427, 428 to 470, 471 to 514, 515 to 557, and 558 to 600; these read GYVY…DWVA, RNLY…HPVM, GLMY…DLQE, GKLY…LGDF, and IYWT…AKVV. YWTD repeat units lie at residues 388–391 and 431–434; these read YWTD. N-linked (GlcNAc...) asparagine glycosylation occurs at Asn446. A YWTD 7 repeat occupies 474-477; it reads YWTD. Asn499 carries an N-linked (GlcNAc...) asparagine glycan. One copy of the YWTD 8 repeat lies at 559 to 562; sequence YWTD. Residues 601-641 form the EGF-like 2 domain; that stretch reads GTNPCADRNGGCSHLCFFTPHATRCGCPIGLELLSDMKTCI. Cystine bridges form between Cys605–Cys616, Cys612–Cys625, and Cys627–Cys640. A beta-propeller 3 region spans residues 644 to 903; that stretch reads EAFLVFTSRA…VFHSSRQDGL (260 aa). LDL-receptor class B repeat units follow at residues 687-729, 730-772, 773-815, 816-855, and 856-898; these read NHIY…DWMG, KNLY…DPTK, GYIY…DYAD, QRLYWTDLDTNMIESSNMLGQERVVIADDLPHPFGLTQYS, and DYIY…FHSS. The stretch at 690-693 is one YWTD 9 repeat; sequence YWTD. N-linked (GlcNAc...) asparagine glycosylation is present at Asn705. YWTD repeat units lie at residues 819–822 and 859–862; these read YWTD. N-linked (GlcNAc...) asparagine glycosylation is present at Asn878. Residues 902–942 enclose the EGF-like 3 domain; it reads GLNDCMHNNGQCGQLCLAIPGGHRCGCASHYTLDPSSRNCS. 3 disulfide bridges follow: Cys906/Cys917, Cys913/Cys926, and Cys928/Cys941. The tract at residues 945-1212 is beta-propeller 4; that stretch reads TTFLLFSQKS…AVEEVSLEEF (268 aa). LDL-receptor class B repeat units follow at residues 989-1035, 1036-1078, 1079-1123, 1124-1164, and 1165-1207; these read KFIY…DIYS, RTLF…NAER, GYLY…DNTL, GKLF…TILG, and KHLY…VEEV. The EGF-like 4 domain maps to 1213-1254; that stretch reads SAHPCARDNGGCSHICIAKGDGTPRCSCPVHLVLLQNLLTCG. 12 disulfides stabilise this stretch: Cys1217–Cys1228, Cys1224–Cys1238, Cys1240–Cys1253, Cys1259–Cys1273, Cys1266–Cys1286, Cys1280–Cys1295, Cys1298–Cys1310, Cys1305–Cys1323, Cys1317–Cys1332, Cys1336–Cys1348, Cys1343–Cys1361, and Cys1355–Cys1370. LDL-receptor class A domains follow at residues 1258-1296, 1297-1333, and 1335-1371; these read TCSPDQFACATGEIDCIPGAWRCDGFPECDDQSDEEGCP, VCSAAQFPCARGQCVDLRLRCDGEADCQDRSDEADCD, and ICLPNQFRCASGQCVLIKQQCDSFPDCIDGSDELMCE. Residues 1385–1407 traverse the membrane as a helical segment; that stretch reads SAIGPVIGIILSLFVMGGVYFVC. Topologically, residues 1408 to 1615 are cytoplasmic; it reads QRVVCQRYAG…PPPSPCTDSS (208 aa). A disordered region spans residues 1475–1501; that stretch reads RNHVTGASSSSSSSTKATLYPPILNPP. The PPPSP motif A motif lies at 1500 to 1506; that stretch reads PPPSPAT. The PPPSP motif B motif lies at 1538–1545; it reads PPTTPCST. The tract at residues 1568-1615 is disordered; that stretch reads SDSDPYPPPPTPHSQYLSAEDSCPPSPATERSYFHLFPPPPSPCTDSS. Positions 1574–1581 match the PPPSP motif C motif; sequence PPPPTPHS. A PPPSP motif D motif is present at residues 1591–1596; that stretch reads PPSPAT. Residues 1604 to 1615 are compositionally biased toward pro residues; it reads FPPPPSPCTDSS. The PPPSP motif E signature appears at 1605 to 1612; it reads PPPPSPCT.

The protein belongs to the LDLR family. In terms of assembly, homodimer; disulfide-linked. Forms phosphorylated oligomer aggregates on Wnt-signaling. Component of a Wnt-signaling complex that contains a WNT protein, a FZD protein and LRP5 or LRP6. Interacts with FZD8; the interaction is formed on WNT-binding and signaling. Interacts (via the phosphorylated PPPSP motif domains) with AXIN1; the interaction prevents inhibition of beta-catenin phosphorylation and signaling and is enhanced in the presence of GSK3B and WNT1 or WNT3A. Interacts (via beta-propeller regions 3 and 4) with DKK1; the interaction, enhanced by MESD and/or KREMEN, inhibits beta-catenin signaling by preventing GSK3-mediated phosphorylation of the PPPSP motifs and subsequent, AXIN1 binding. Interacts with MESD; the interaction prevents the formation of LRP5 aggregates, targets LRP5 to the plasma membrane and, when complexed with KREMEN2, increases DKK1 binding. Interacts with CSNK1E. Interacts with SOST; the interaction antagonizes canonical Wnt signaling. Interacts with APCDD1. Interacts with CAPRIN2. In terms of processing, phosphorylation of cytoplasmic PPPSP motifs regulates the signal transduction of the Wnt signaling pathway through acting as a docking site for AXIN1. In terms of tissue distribution, widely expressed, with the highest level of expression in the liver and in aorta.

It is found in the membrane. The protein resides in the endoplasmic reticulum. Functionally, acts as a coreceptor with members of the frizzled family of seven-transmembrane spanning receptors to transduce signal by Wnt proteins. Activates the canonical Wnt signaling pathway that controls cell fate determination and self-renewal during embryonic development and adult tissue regeneration. In particular, may play an important role in the development of the posterior patterning of the epiblast during gastrulation. During bone development, regulates osteoblast proliferation and differentiation thus determining bone mass. Mechanistically, the formation of the signaling complex between Wnt ligand, frizzled receptor and LRP5 coreceptor promotes the recruitment of AXIN1 to LRP5, stabilizing beta-catenin/CTNNB1 and activating TCF/LEF-mediated transcriptional programs. Acts as a coreceptor for non-Wnt proteins, such as norrin/NDP. Binding of norrin/NDP to frizzled 4/FZD4-LRP5 receptor complex triggers beta-catenin/CTNNB1-dependent signaling known to be required for retinal vascular development. Plays a role in controlling postnatal vascular regression in retina via macrophage-induced endothelial cell apoptosis. This chain is Low-density lipoprotein receptor-related protein 5, found in Homo sapiens (Human).